Reading from the N-terminus, the 53-residue chain is MPQMMPINWIFFLFFFICIFLIFNIMNYFIYEKKMHLINKFNQKKKLTFNWKW.

The helical transmembrane segment at 9 to 29 (WIFFLFFFICIFLIFNIMNYF) threads the bilayer.

The protein belongs to the ATPase protein 8 family. F-type ATPases have 2 components, CF(1) - the catalytic core - and CF(0) - the membrane proton channel.

The protein resides in the mitochondrion membrane. Mitochondrial membrane ATP synthase (F(1)F(0) ATP synthase or Complex V) produces ATP from ADP in the presence of a proton gradient across the membrane which is generated by electron transport complexes of the respiratory chain. F-type ATPases consist of two structural domains, F(1) - containing the extramembraneous catalytic core and F(0) - containing the membrane proton channel, linked together by a central stalk and a peripheral stalk. During catalysis, ATP synthesis in the catalytic domain of F(1) is coupled via a rotary mechanism of the central stalk subunits to proton translocation. Part of the complex F(0) domain. Minor subunit located with subunit a in the membrane. This Bombyx mori (Silk moth) protein is ATP synthase protein 8 (mt:ATPase8).